We begin with the raw amino-acid sequence, 147 residues long: Nucleoside diphosphate kinase (147 aa).

Residues lysine 9, phenylalanine 57, arginine 85, threonine 91, arginine 102, and asparagine 112 each coordinate ATP. The active-site Pros-phosphohistidine intermediate is histidine 115.

This sequence belongs to the NDK family. Homotetramer. Requires Mg(2+) as cofactor.

It is found in the cytoplasm. The enzyme catalyses a 2'-deoxyribonucleoside 5'-diphosphate + ATP = a 2'-deoxyribonucleoside 5'-triphosphate + ADP. It catalyses the reaction a ribonucleoside 5'-diphosphate + ATP = a ribonucleoside 5'-triphosphate + ADP. In terms of biological role, major role in the synthesis of nucleoside triphosphates other than ATP. The ATP gamma phosphate is transferred to the NDP beta phosphate via a ping-pong mechanism, using a phosphorylated active-site intermediate. The chain is Nucleoside diphosphate kinase from Listeria monocytogenes serotype 4a (strain HCC23).